The primary structure comprises 295 residues: Pyridoxal 5'-phosphate synthase subunit PdxS (295 aa).

Asp25 serves as a coordination point for D-ribose 5-phosphate. Catalysis depends on Lys82, which acts as the Schiff-base intermediate with D-ribose 5-phosphate. Gly154 contacts D-ribose 5-phosphate. Arg166 is a D-glyceraldehyde 3-phosphate binding site. Residues Gly215 and 236–237 each bind D-ribose 5-phosphate; that span reads GS.

This sequence belongs to the PdxS/SNZ family. As to quaternary structure, in the presence of PdxT, forms a dodecamer of heterodimers.

The enzyme catalyses aldehydo-D-ribose 5-phosphate + D-glyceraldehyde 3-phosphate + L-glutamine = pyridoxal 5'-phosphate + L-glutamate + phosphate + 3 H2O + H(+). It participates in cofactor biosynthesis; pyridoxal 5'-phosphate biosynthesis. Its function is as follows. Catalyzes the formation of pyridoxal 5'-phosphate from ribose 5-phosphate (RBP), glyceraldehyde 3-phosphate (G3P) and ammonia. The ammonia is provided by the PdxT subunit. Can also use ribulose 5-phosphate and dihydroxyacetone phosphate as substrates, resulting from enzyme-catalyzed isomerization of RBP and G3P, respectively. In Natranaerobius thermophilus (strain ATCC BAA-1301 / DSM 18059 / JW/NM-WN-LF), this protein is Pyridoxal 5'-phosphate synthase subunit PdxS.